A 1106-amino-acid polypeptide reads, in one-letter code: Communication mutant protein F (1106 aa).

The N-terminal stretch at Met1–Ala28 is a signal peptide. The G8 domain occupies Thr254–Ser380. 7 N-linked (GlcNAc...) asparagine glycosylation sites follow: Asn267, Asn306, Asn512, Asn536, Asn677, Asn715, and Asn833.

Belongs to the comF family.

The protein localises to the secreted. The polypeptide is Communication mutant protein F (comF-1) (Dictyostelium discoideum (Social amoeba)).